The primary structure comprises 276 residues: Small ribosomal subunit protein uS2 (276 aa).

The interval 226-276 is disordered; that stretch reads KKAREERQLAAAREAAGEPKSEDAPAEAAATEEAPATEAPAAEAQQENAAE. A compositionally biased stretch (low complexity) spans 251–276; that stretch reads AEAAATEEAPATEAPAAEAQQENAAE.

It belongs to the universal ribosomal protein uS2 family.

The protein is Small ribosomal subunit protein uS2 of Corynebacterium efficiens (strain DSM 44549 / YS-314 / AJ 12310 / JCM 11189 / NBRC 100395).